A 69-amino-acid chain; its full sequence is UPF0337 protein DIP1660 (69 aa).

Basic and acidic residues-rich tracts occupy residues 1–19 and 30–41; these read MSDF…KEAV and DEGRADQTKADV. Residues 1 to 42 form a disordered region; the sequence is MSDFENKIEELGGKAKEAVGEATENEQLADEGRADQTKADVK.

Belongs to the UPF0337 (CsbD) family.

The polypeptide is UPF0337 protein DIP1660 (Corynebacterium diphtheriae (strain ATCC 700971 / NCTC 13129 / Biotype gravis)).